An 88-amino-acid chain; its full sequence is UPF0297 protein str1959 (88 aa).

It belongs to the UPF0297 family.

The chain is UPF0297 protein str1959 from Streptococcus thermophilus (strain CNRZ 1066).